The sequence spans 153 residues: Type II secretion system core protein G (153 aa).

A propeptide spans 1–7 (MERRQRG) (leader sequence). Phenylalanine 8 is subject to N-methylphenylalanine. Residues 8–28 (FTLLEIMVVIVILGVLASLVV) form a helical membrane-spanning segment. 2 disordered regions span residues 68–91 (EQGLGALVKKPTTPPEPRNYPQDG) and 126–153 (MPDTDDDIGNWNVGNGAHNNGGNGNGNP). Over residues 134–143 (GNWNVGNGAH) the composition is skewed to low complexity. Residues 144 to 153 (NNGGNGNGNP) are compositionally biased toward gly residues.

The protein belongs to the GSP G family. Type II secretion system is composed of four main components: the outer membrane complex, the inner membrane complex, the cytoplasmic secretion ATPase and the periplasm-spanning pseudopilus. Forms homomultimers. Cleaved by the prepilin peptidase. In terms of processing, methylated by prepilin peptidase at the amino group of the N-terminal phenylalanine once the leader sequence is cleaved.

Its subcellular location is the cell inner membrane. Its function is as follows. Core component of the type II secretion system required for the energy-dependent secretion of extracellular factors such as proteases and toxins from the periplasm. Pseudopilin (pilin-like) protein that polymerizes to form the pseudopilus. Further polymerization triggers pseudopilus growth. In Dickeya chrysanthemi (Pectobacterium chrysanthemi), this protein is Type II secretion system core protein G (outG).